A 197-amino-acid chain; its full sequence is Large ribosomal subunit protein bL9 (197 aa).

Residues 178–197 (GEFFDPEAQEDEAAAGETAQ) form a disordered region. Positions 181–191 (FDPEAQEDEAA) are enriched in acidic residues.

Belongs to the bacterial ribosomal protein bL9 family.

Binds to the 23S rRNA. The protein is Large ribosomal subunit protein bL9 of Bradyrhizobium sp. (strain BTAi1 / ATCC BAA-1182).